A 164-amino-acid chain; its full sequence is ATP synthase subunit b 2 (164 aa).

Residues 4-24 (TFWAFVGLVLFLALLVYFEVP) traverse the membrane as a helical segment.

It belongs to the ATPase B chain family. In terms of assembly, F-type ATPases have 2 components, F(1) - the catalytic core - and F(0) - the membrane proton channel. F(1) has five subunits: alpha(3), beta(3), gamma(1), delta(1), epsilon(1). F(0) has three main subunits: a(1), b(2) and c(10-14). The alpha and beta chains form an alternating ring which encloses part of the gamma chain. F(1) is attached to F(0) by a central stalk formed by the gamma and epsilon chains, while a peripheral stalk is formed by the delta and b chains.

The protein resides in the cell inner membrane. Its function is as follows. F(1)F(0) ATP synthase produces ATP from ADP in the presence of a proton or sodium gradient. F-type ATPases consist of two structural domains, F(1) containing the extramembraneous catalytic core and F(0) containing the membrane proton channel, linked together by a central stalk and a peripheral stalk. During catalysis, ATP synthesis in the catalytic domain of F(1) is coupled via a rotary mechanism of the central stalk subunits to proton translocation. Functionally, component of the F(0) channel, it forms part of the peripheral stalk, linking F(1) to F(0). The chain is ATP synthase subunit b 2 from Bartonella henselae (strain ATCC 49882 / DSM 28221 / CCUG 30454 / Houston 1) (Rochalimaea henselae).